The chain runs to 89 residues: Small ribosomal subunit protein uS15 (89 aa).

This sequence belongs to the universal ribosomal protein uS15 family. In terms of assembly, part of the 30S ribosomal subunit. Forms a bridge to the 50S subunit in the 70S ribosome, contacting the 23S rRNA.

In terms of biological role, one of the primary rRNA binding proteins, it binds directly to 16S rRNA where it helps nucleate assembly of the platform of the 30S subunit by binding and bridging several RNA helices of the 16S rRNA. Its function is as follows. Forms an intersubunit bridge (bridge B4) with the 23S rRNA of the 50S subunit in the ribosome. This Prochlorococcus marinus (strain MIT 9215) protein is Small ribosomal subunit protein uS15.